Reading from the N-terminus, the 228-residue chain is MKHFTAAVATVALSLALAGCSFNIKTDSAPTTSPTTTSPTTSTTTTSATTSAQAAGPNYTIADYIRDNHIQETPVHHGDPGSPTIDLPVPDDWRLLPESSRAPYGGIVYTQPADPNDPPTIVAILSKLTGDIDPAKVLQFAPGELKNLPGFQGSGDGSAATLGGFSAWQLGGSYSKNGKLRTVAQKTVVIPSQGAVFVLQLNADALDDETMTLMDAANVIDEQTTITP.

An N-terminal signal peptide occupies residues 1 to 19; it reads MKHFTAAVATVALSLALAG. Cys20 carries N-palmitoyl cysteine lipidation. A lipid anchor (S-diacylglycerol cysteine) is attached at Cys20. Residues 26–53 form a disordered region; the sequence is TDSAPTTSPTTTSPTTSTTTTSATTSAQ. The span at 28–52 shows a compositional bias: low complexity; the sequence is SAPTTSPTTTSPTTSTTTTSATTSA.

Interacts with the periplasmic loop domains of the mycolate transporters MmpL3 and MmpL11. Also interacts with secreted cell envelope biosynthetic enzymes such as Ag85A. These interactions are weak and may require a putative mycobacterial adapter protein or molecule. Interacts with human ubiquitin ligase CBL.

It is found in the cell membrane. It localises to the secreted. Involved in cell envelope biogenesis. May act as a membrane fusion protein, connecting MmpL transporters with periplasmic proteins, and play a role in cell envelope lipid changes during biofilm maturation. In terms of biological role, is also a virulence factor required for intracellular survival. Associates with CBL, a host ubiquitin ligase, and probably blocks the normal functions of CBL and disturbs CBL-mediated antibacterial activity. Interaction counteracts antibacterial defense but causes a reciprocal enhancement of antiviral defense. This is Lipoprotein LpqN from Mycobacterium tuberculosis (strain ATCC 25618 / H37Rv).